The sequence spans 127 residues: Putative lipoprotein LprJ (127 aa).

Residues M1 to S34 form the signal peptide. The N-palmitoyl cysteine moiety is linked to residue C35. The S-diacylglycerol cysteine moiety is linked to residue C35. At C35–D99 the chain is on the extracellular side. Residues M100–L120 form a helical membrane-spanning segment. Residues M121–A127 are Cytoplasmic-facing.

In terms of assembly, may interact with sensor protein KdpD. In terms of processing, modified by Lgt on Cys-35 with an S-linked diacylglycerol, signal peptide is removed by LspA, modified by Lnt with amide-linked fatty acid.

It is found in the cell membrane. Its function is as follows. Overexpression induces expression of sensor protein kdpD gene at low K(+) concentrations (0 and 250 uM, tested in M.smegatis). The chain is Putative lipoprotein LprJ (lprJ) from Mycobacterium tuberculosis (strain ATCC 25618 / H37Rv).